The primary structure comprises 389 residues: Chalcone synthase 9 (389 aa).

C164 is a catalytic residue.

Belongs to the thiolase-like superfamily. Chalcone/stilbene synthases family.

The enzyme catalyses (E)-4-coumaroyl-CoA + 3 malonyl-CoA + 3 H(+) = 2',4,4',6'-tetrahydroxychalcone + 3 CO2 + 4 CoA. It participates in secondary metabolite biosynthesis; flavonoid biosynthesis. In terms of biological role, the primary product of this enzyme is 4,2',4',6'-tetrahydroxychalcone (also termed naringenin-chalcone or chalcone) which can under specific conditions spontaneously isomerize into naringenin. This chain is Chalcone synthase 9 (CHS9), found in Daucus carota (Wild carrot).